Consider the following 192-residue polypeptide: Erythropoietin (192 aa).

A signal peptide spans 1-26; that stretch reads MGSCECPALLLLLSLLLLPLGLPVLG. Cystine bridges form between Cys-33–Cys-187 and Cys-55–Cys-59. A glycan (N-linked (GlcNAc...) asparagine) is linked at Asn-50. Residues Asn-64 and Asn-109 are each glycosylated (N-linked (GlcNAc...) asparagine).

It belongs to the EPO/TPO family. Produced by kidney or liver of adult mammals and by liver of fetal or neonatal mammals.

The protein resides in the secreted. Hormone involved in the regulation of erythrocyte proliferation and differentiation and the maintenance of a physiological level of circulating erythrocyte mass. Binds to EPOR leading to EPOR dimerization and JAK2 activation thereby activating specific downstream effectors, including STAT1 and STAT3. The sequence is that of Erythropoietin (EPO) from Felis catus (Cat).